The primary structure comprises 193 residues: Protein GrpE (193 aa).

Residues 1–22 (MDPKEKEKMAEELNVEETKDTA) are compositionally biased toward basic and acidic residues. Residues 1–45 (MDPKEKEKMAEELNVEETKDTAEEQPQDDQAEEAAPLTHEEQLEK) form a disordered region. The segment covering 23–32 (EEQPQDDQAE) has biased composition (acidic residues).

It belongs to the GrpE family. As to quaternary structure, homodimer.

The protein localises to the cytoplasm. Its function is as follows. Participates actively in the response to hyperosmotic and heat shock by preventing the aggregation of stress-denatured proteins, in association with DnaK and GrpE. It is the nucleotide exchange factor for DnaK and may function as a thermosensor. Unfolded proteins bind initially to DnaJ; upon interaction with the DnaJ-bound protein, DnaK hydrolyzes its bound ATP, resulting in the formation of a stable complex. GrpE releases ADP from DnaK; ATP binding to DnaK triggers the release of the substrate protein, thus completing the reaction cycle. Several rounds of ATP-dependent interactions between DnaJ, DnaK and GrpE are required for fully efficient folding. The protein is Protein GrpE of Bacteroides thetaiotaomicron (strain ATCC 29148 / DSM 2079 / JCM 5827 / CCUG 10774 / NCTC 10582 / VPI-5482 / E50).